We begin with the raw amino-acid sequence, 102 residues long: Urease subunit beta (102 aa).

It belongs to the urease beta subunit family. In terms of assembly, heterotrimer of UreA (gamma), UreB (beta) and UreC (alpha) subunits. Three heterotrimers associate to form the active enzyme.

Its subcellular location is the cytoplasm. It carries out the reaction urea + 2 H2O + H(+) = hydrogencarbonate + 2 NH4(+). The protein operates within nitrogen metabolism; urea degradation; CO(2) and NH(3) from urea (urease route): step 1/1. This chain is Urease subunit beta, found in Methylobacillus flagellatus (strain ATCC 51484 / DSM 6875 / VKM B-1610 / KT).